A 200-amino-acid chain; its full sequence is Small ribosomal subunit protein eS1 (200 aa).

This sequence belongs to the eukaryotic ribosomal protein eS1 family.

The sequence is that of Small ribosomal subunit protein eS1 from Thermococcus sibiricus (strain DSM 12597 / MM 739).